The following is a 333-amino-acid chain: Anthranilate phosphoribosyltransferase (333 aa).

5-phospho-alpha-D-ribose 1-diphosphate contacts are provided by residues Gly-81, 84-85, Thr-89, 91-94, 109-117, and Ala-121; these read GD, NIST, and KHGNRSVSS. Gly-81 is an anthranilate binding site. Ser-93 contacts Mg(2+). Position 112 (Asn-112) interacts with anthranilate. Residue Arg-167 participates in anthranilate binding. Mg(2+) contacts are provided by Asp-225 and Glu-226.

This sequence belongs to the anthranilate phosphoribosyltransferase family. As to quaternary structure, homodimer. Requires Mg(2+) as cofactor.

The catalysed reaction is N-(5-phospho-beta-D-ribosyl)anthranilate + diphosphate = 5-phospho-alpha-D-ribose 1-diphosphate + anthranilate. It functions in the pathway amino-acid biosynthesis; L-tryptophan biosynthesis; L-tryptophan from chorismate: step 2/5. In terms of biological role, catalyzes the transfer of the phosphoribosyl group of 5-phosphorylribose-1-pyrophosphate (PRPP) to anthranilate to yield N-(5'-phosphoribosyl)-anthranilate (PRA). The sequence is that of Anthranilate phosphoribosyltransferase from Actinobacillus succinogenes (strain ATCC 55618 / DSM 22257 / CCUG 43843 / 130Z).